The primary structure comprises 326 residues: Ketol-acid reductoisomerase (NADP(+)) (326 aa).

The KARI N-terminal Rossmann domain occupies 1–180 (MDIIHDNAAD…GLTRGGVLEC (180 aa)). NADP(+) is bound by residues 24 to 27 (YGAQ), R47, and S51. The active site involves H106. G132 lines the NADP(+) pocket. A KARI C-terminal knotted domain is found at 181–326 (TMAQETYEDL…AKIRSLFERN (146 aa)). The Mg(2+) site is built by D189, E193, E225, and E229. Position 250 (S250) interacts with substrate.

The protein belongs to the ketol-acid reductoisomerase family. It depends on Mg(2+) as a cofactor.

The catalysed reaction is (2R)-2,3-dihydroxy-3-methylbutanoate + NADP(+) = (2S)-2-acetolactate + NADPH + H(+). It carries out the reaction (2R,3R)-2,3-dihydroxy-3-methylpentanoate + NADP(+) = (S)-2-ethyl-2-hydroxy-3-oxobutanoate + NADPH + H(+). It participates in amino-acid biosynthesis; L-isoleucine biosynthesis; L-isoleucine from 2-oxobutanoate: step 2/4. The protein operates within amino-acid biosynthesis; L-valine biosynthesis; L-valine from pyruvate: step 2/4. Its function is as follows. Involved in the biosynthesis of branched-chain amino acids (BCAA). Catalyzes an alkyl-migration followed by a ketol-acid reduction of (S)-2-acetolactate (S2AL) to yield (R)-2,3-dihydroxy-isovalerate. In the isomerase reaction, S2AL is rearranged via a Mg-dependent methyl migration to produce 3-hydroxy-3-methyl-2-ketobutyrate (HMKB). In the reductase reaction, this 2-ketoacid undergoes a metal-dependent reduction by NADPH to yield (R)-2,3-dihydroxy-isovalerate. This is Ketol-acid reductoisomerase (NADP(+)) from Akkermansia muciniphila (strain ATCC BAA-835 / DSM 22959 / JCM 33894 / BCRC 81048 / CCUG 64013 / CIP 107961 / Muc).